The primary structure comprises 133 residues: S-adenosylmethionine decarboxylase proenzyme (133 aa).

Catalysis depends on serine 65, which acts as the Schiff-base intermediate with substrate; via pyruvic acid. Serine 65 carries the post-translational modification Pyruvic acid (Ser); by autocatalysis. Histidine 70 serves as the catalytic Proton acceptor; for processing activity. Cysteine 85 acts as the Proton donor; for catalytic activity in catalysis.

The protein belongs to the prokaryotic AdoMetDC family. Type 1 subfamily. As to quaternary structure, heterotetramer of two alpha and two beta chains arranged as a dimer of alpha/beta heterodimers. Pyruvate is required as a cofactor. In terms of processing, is synthesized initially as an inactive proenzyme. Formation of the active enzyme involves a self-maturation process in which the active site pyruvoyl group is generated from an internal serine residue via an autocatalytic post-translational modification. Two non-identical subunits are generated from the proenzyme in this reaction, and the pyruvate is formed at the N-terminus of the alpha chain, which is derived from the carboxyl end of the proenzyme. The post-translation cleavage follows an unusual pathway, termed non-hydrolytic serinolysis, in which the side chain hydroxyl group of the serine supplies its oxygen atom to form the C-terminus of the beta chain, while the remainder of the serine residue undergoes an oxidative deamination to produce ammonia and the pyruvoyl group blocking the N-terminus of the alpha chain.

It carries out the reaction S-adenosyl-L-methionine + H(+) = S-adenosyl 3-(methylsulfanyl)propylamine + CO2. Its pathway is amine and polyamine biosynthesis; S-adenosylmethioninamine biosynthesis; S-adenosylmethioninamine from S-adenosyl-L-methionine: step 1/1. Catalyzes the decarboxylation of S-adenosylmethionine to S-adenosylmethioninamine (dcAdoMet), the propylamine donor required for the synthesis of the polyamines spermine and spermidine from the diamine putrescine. The sequence is that of S-adenosylmethionine decarboxylase proenzyme from Brevibacillus brevis (strain 47 / JCM 6285 / NBRC 100599).